Reading from the N-terminus, the 176-residue chain is Flavodoxin-like domain-containing protein BilS (176 aa).

The protein operates within porphyrin-containing compound metabolism; protoheme degradation. Its function is as follows. Together with BilR, catalyzes reduction of mesobilirubin and/or bilirubin to urobilinogen, a key step during heme degradation. BilS is probably involved in electron transfer for the bilirubin reductase BilR. This Clostridioides difficile (strain CD3) protein is Flavodoxin-like domain-containing protein BilS.